The primary structure comprises 102 residues: Putative pterin-4-alpha-carbinolamine dehydratase (102 aa).

It belongs to the pterin-4-alpha-carbinolamine dehydratase family.

The enzyme catalyses (4aS,6R)-4a-hydroxy-L-erythro-5,6,7,8-tetrahydrobiopterin = (6R)-L-erythro-6,7-dihydrobiopterin + H2O. The protein is Putative pterin-4-alpha-carbinolamine dehydratase of Burkholderia lata (strain ATCC 17760 / DSM 23089 / LMG 22485 / NCIMB 9086 / R18194 / 383).